A 189-amino-acid polypeptide reads, in one-letter code: Thermostable direct hemolysin 1 (189 aa).

Positions 1-24 (MKHQYFAKKSFLFISMLAAFKTSA) are cleaved as a signal peptide. Residues C175 and C185 are joined by a disulfide bond.

Belongs to the TDH hemolysin family. Homodimer.

In terms of biological role, bacterial hemolysins are exotoxins that attack blood cell membranes and cause cell rupture by mechanisms not clearly defined. In Vibrio parahaemolyticus serotype O3:K6 (strain RIMD 2210633), this protein is Thermostable direct hemolysin 1 (tdh1).